A 520-amino-acid chain; its full sequence is Maturase K (520 aa).

The protein belongs to the intron maturase 2 family. MatK subfamily.

The protein resides in the plastid. Its subcellular location is the chloroplast. Its function is as follows. Usually encoded in the trnK tRNA gene intron. Probably assists in splicing its own and other chloroplast group II introns. This chain is Maturase K, found in Beaucarnea recurvata (Elephant-foot tree).